The primary structure comprises 290 residues: UDP-N-acetylenolpyruvoylglucosamine reductase (290 aa).

The 168-residue stretch at 20 to 187 (GVGGESEMWF…SRVRLKLRPS (168 aa)) folds into the FAD-binding PCMH-type domain. Residue R167 is part of the active site.

It belongs to the MurB family. Requires FAD as cofactor.

It is found in the cytoplasm. It catalyses the reaction UDP-N-acetyl-alpha-D-muramate + NADP(+) = UDP-N-acetyl-3-O-(1-carboxyvinyl)-alpha-D-glucosamine + NADPH + H(+). It participates in cell wall biogenesis; peptidoglycan biosynthesis. Functionally, cell wall formation. The polypeptide is UDP-N-acetylenolpyruvoylglucosamine reductase (Deinococcus radiodurans (strain ATCC 13939 / DSM 20539 / JCM 16871 / CCUG 27074 / LMG 4051 / NBRC 15346 / NCIMB 9279 / VKM B-1422 / R1)).